We begin with the raw amino-acid sequence, 425 residues long: MATASFDSAPGASRALPAIEKAPEVTALSTLPGRKASLVGLTREGLKQALIGIGVPERETRMRVSQIWHWLYVRGAREFSEMTNVGKGLKAQLAEHFTLDRPEVVTEQVSRDGTRKWLLRMAPTGAHDHNRGAEIECVYIPGDDRGTLCVSSQVGCTLTCSFCHTGTQRLVRNLSTAEIVSQLVVARDALGDFTGQMPGKDGGEVGRLVTNIVFMGMGEPLYNLDAVIDAIAVMSDQEGLALSRRRITVSTSGVVPQIERLGLEANAMLAISLHAVRDELRDELVPLNRKYPIAQLLEACRNYPGLSNARRITFEYVMLKGVNDSDADARALVRLLKGIPAKINLIPFNPWPGSKYECSDWERIERFSEFVFNAGYASPVRTPRGRDILAACGQLKSETEKLRARARMMLEEGMGAEAVYADQVD.

The active-site Proton acceptor is Glu136. One can recognise a Radical SAM core domain in the interval 142 to 389 (GDDRGTLCVS…VRTPRGRDIL (248 aa)). An intrachain disulfide couples Cys149 to Cys392. [4Fe-4S] cluster contacts are provided by Cys156, Cys160, and Cys163. S-adenosyl-L-methionine is bound by residues 218 to 219 (GE), Ser250, 272 to 274 (SLH), and Asn349. Cys392 serves as the catalytic S-methylcysteine intermediate.

It belongs to the radical SAM superfamily. RlmN family. The cofactor is [4Fe-4S] cluster.

The protein resides in the cytoplasm. The catalysed reaction is adenosine(2503) in 23S rRNA + 2 reduced [2Fe-2S]-[ferredoxin] + 2 S-adenosyl-L-methionine = 2-methyladenosine(2503) in 23S rRNA + 5'-deoxyadenosine + L-methionine + 2 oxidized [2Fe-2S]-[ferredoxin] + S-adenosyl-L-homocysteine. It catalyses the reaction adenosine(37) in tRNA + 2 reduced [2Fe-2S]-[ferredoxin] + 2 S-adenosyl-L-methionine = 2-methyladenosine(37) in tRNA + 5'-deoxyadenosine + L-methionine + 2 oxidized [2Fe-2S]-[ferredoxin] + S-adenosyl-L-homocysteine. Functionally, specifically methylates position 2 of adenine 2503 in 23S rRNA and position 2 of adenine 37 in tRNAs. m2A2503 modification seems to play a crucial role in the proofreading step occurring at the peptidyl transferase center and thus would serve to optimize ribosomal fidelity. The protein is Dual-specificity RNA methyltransferase RlmN of Methylorubrum populi (strain ATCC BAA-705 / NCIMB 13946 / BJ001) (Methylobacterium populi).